Reading from the N-terminus, the 1392-residue chain is Protein dispatched homolog 3 (1392 aa).

The Cytoplasmic segment spans residues 1-73 (MDTEDDPLLQ…LGWAFTNPCC (73 aa)). Residues 16–40 (EEQEEEEATGETFLGAQKPGPQPGA) form a disordered region. Residues 74–94 (AGLVLFLGCSIPMALSAFMFL) form a helical membrane-spanning segment. The Lumenal segment spans residues 95–462 (YYPPLDIDIS…YEVRRTFNND (368 aa)). The tract at residues 162–248 (GNRSRQASRA…HAAVAANQSR (87 aa)) is disordered. Residue asparagine 163 is glycosylated (N-linked (GlcNAc...) asparagine). Residues 190-199 (SAAQKPTANR) show a composition bias toward polar residues. An SSD domain is found at 457-615 (RTFNNDMLLA…LVTMPAALGL (159 aa)). The helical transmembrane segment at 463-483 (MLLAFISSSCIAALVYILTSC) threads the bilayer. Serine 484 is a topological domain (cytoplasmic). A helical transmembrane segment spans residues 485–505 (VFLSFFGIASIGLSCLVALFL). At 506-508 (YHV) the chain is on the lumenal side. Residues 509 to 529 (VFGIQYLGILNGVAAFVIVGI) traverse the membrane as a helical segment. Residues 530-573 (GVDDVFVFINTYRQATHLEDPQLRMIHTVQTAGKATFFTSLTTA) are Cytoplasmic-facing. The chain crosses the membrane as a helical span at residues 574-594 (AAYAANVFSQIPAVHDFGLFM). Serine 595 is a topological domain (lumenal). A helical membrane pass occupies residues 596–616 (LIVSCCWLAVLVTMPAALGLW). Residues 617-729 (SLYLAPLESS…WVLWSAVKSR (113 aa)) are Cytoplasmic-facing. The helical transmembrane segment at 730–750 (WVIVGLFVSILILSLVFASRL) threads the bilayer. Residues 751-1182 (RPASRAPLLF…IFMEIVGVQS (432 aa)) are Lumenal-facing. N-linked (GlcNAc...) asparagine glycosylation is present at asparagine 1021. Residues 1183 to 1203 (ALCGLVLSLLICVAAVAVFTT) traverse the membrane as a helical segment. A topological domain (cytoplasmic) is located at residue histidine 1204. A helical membrane pass occupies residues 1205-1225 (ILLLLPVLLSILGIVCLVVTI). Residues 1226–1291 (MYWSGWEMGA…TLEAVRHVGV (66 aa)) lie on the Lumenal side of the membrane. Residues 1292-1312 (AIVSSALTTVIATVPLFFCII) traverse the membrane as a helical segment. Residues 1313-1320 (APFAKFGK) lie on the Cytoplasmic side of the membrane. A helical membrane pass occupies residues 1321-1341 (IVALNTGVSILYTLTVSTALL). Residues 1342-1358 (GIMAPSSFTRTRTSFLK) lie on the Lumenal side of the membrane. The helical transmembrane segment at 1359 to 1379 (ALGAVLLAGALGLGACLVLLQ) threads the bilayer. Topologically, residues 1380–1392 (SGYKIPLPAGASL) are cytoplasmic.

The protein belongs to the patched family. Expressed in brain and testis.

The protein localises to the endoplasmic reticulum membrane. The protein resides in the nucleus membrane. It localises to the cytoplasmic vesicle membrane. Its function is as follows. Plays a role in neuronal proliferation and differentiation. Plays a role in the accumulation of cellular cholesterol. Involved in intracellular lipid droplet formation. May contribute to cholesterol homeostasis in neuronal cells. This is Protein dispatched homolog 3 from Homo sapiens (Human).